The chain runs to 317 residues: Tumor necrosis factor ligand superfamily member 11 (317 aa).

Residues 1-16 (MRRASRDYTKYLRGSE) show a composition bias toward basic and acidic residues. A disordered region spans residues 1–43 (MRRASRDYTKYLRGSEEMGGGPGAPHEGPLHAPPPPAPHQPPA). The Cytoplasmic portion of the chain corresponds to 1-47 (MRRASRDYTKYLRGSEEMGGGPGAPHEGPLHAPPPPAPHQPPAASRS). The span at 31-41 (HAPPPPAPHQP) shows a compositional bias: pro residues. Residues 48 to 68 (MFVALLGLGLGQVVCSVALFF) form a helical; Signal-anchor for type II membrane protein membrane-spanning segment. The Extracellular portion of the chain corresponds to 69–317 (YFRAQMDPNR…FGAFKVRDID (249 aa)). The 150-residue stretch at 164–313 (PFAHLTINAT…DATYFGAFKV (150 aa)) folds into the THD domain. 2 N-linked (GlcNAc...) asparagine glycosylation sites follow: Asn-171 and Asn-198.

This sequence belongs to the tumor necrosis factor family. Homotrimer. Interacts with TNFRSF11B. Interacts with TNFRSF11A. Interacts with FBN1 (via N-terminal domain) in a Ca(+2)-dependent manner. Interacts with TNFAIP6 (via both Link and CUB domains). In terms of processing, the soluble form of isoform 1 derives from the membrane form by proteolytic processing. The cleavage may be catalyzed by ADAM17. Highest in the peripheral lymph nodes, weak in spleen, peripheral blood Leukocytes, bone marrow, heart, placenta, skeletal muscle, stomach and thyroid.

It localises to the cell membrane. The protein resides in the cytoplasm. It is found in the secreted. Functionally, cytokine that binds to TNFRSF11B/OPG and to TNFRSF11A/RANK. Osteoclast differentiation and activation factor. Augments the ability of dendritic cells to stimulate naive T-cell proliferation. May be an important regulator of interactions between T-cells and dendritic cells and may play a role in the regulation of the T-cell-dependent immune response. May also play an important role in enhanced bone-resorption in humoral hypercalcemia of malignancy. Induces osteoclastogenesis by activating multiple signaling pathways in osteoclast precursor cells, chief among which is induction of long lasting oscillations in the intracellular concentration of Ca (2+) resulting in the activation of NFATC1, which translocates to the nucleus and induces osteoclast-specific gene transcription to allow differentiation of osteoclasts. During osteoclast differentiation, in a TMEM64 and ATP2A2-dependent manner induces activation of CREB1 and mitochondrial ROS generation necessary for proper osteoclast generation. This Homo sapiens (Human) protein is Tumor necrosis factor ligand superfamily member 11 (TNFSF11).